The following is a 634-amino-acid chain: Fluorothreonine transaldolase (634 aa).

Residues Tyr67, His221, and His247 each contribute to the pyridoxal 5'-phosphate site. Lys248 carries the post-translational modification N6-(pyridoxal phosphate)lysine. Arg375 provides a ligand contact to pyridoxal 5'-phosphate. The interval 428–456 (TGDPASAAGPPARERYAPPTAPAGHPARP) is disordered.

The protein belongs to the SHMT family. Requires pyridoxal 5'-phosphate as cofactor.

It catalyses the reaction fluoroacetaldehyde + L-threonine = 4-fluoro-L-threonine + acetaldehyde. Its function is as follows. Transaldolase that catalyzes the final step in 4-fluorothreonine biosynthesis. Mediates a L-threonine/fluoroaceldehyde to 4-fluoro-L-threonine/acetaldehyde crossover reaction. Can also convert chloroacetaldehyde into 4-chloro-L-threonine. Does not use glycine as a substrate. This chain is Fluorothreonine transaldolase, found in Streptantibioticus cattleyicolor (Streptomyces cattleya).